We begin with the raw amino-acid sequence, 101 residues long: NADH-quinone oxidoreductase subunit K (101 aa).

Helical transmembrane passes span 4 to 24 (LGHM…GIFL), 30 to 50 (IVLL…FVAF), and 62 to 82 (FVFF…AILV).

The protein belongs to the complex I subunit 4L family. As to quaternary structure, NDH-1 is composed of 14 different subunits. Subunits NuoA, H, J, K, L, M, N constitute the membrane sector of the complex.

The protein resides in the cell inner membrane. The enzyme catalyses a quinone + NADH + 5 H(+)(in) = a quinol + NAD(+) + 4 H(+)(out). Its function is as follows. NDH-1 shuttles electrons from NADH, via FMN and iron-sulfur (Fe-S) centers, to quinones in the respiratory chain. The immediate electron acceptor for the enzyme in this species is believed to be ubiquinone. Couples the redox reaction to proton translocation (for every two electrons transferred, four hydrogen ions are translocated across the cytoplasmic membrane), and thus conserves the redox energy in a proton gradient. The polypeptide is NADH-quinone oxidoreductase subunit K (Stenotrophomonas maltophilia (strain R551-3)).